Reading from the N-terminus, the 601-residue chain is 66 kDa stress protein (601 aa).

10 WD repeats span residues 56 to 95, 100 to 143, 145 to 184, 187 to 226, 233 to 272, 318 to 357, 435 to 478, 483 to 522, 526 to 565, and 569 to 600; these read EHAQPATVAKYAPSGFYIASGDLSGTLRIWDTTQLEHPLK, VLSG…GEIT, HSKAIASCDFKATRPFRVITGAEDFQANWFEGPPFKFKHA, EHTRFLTCVRFSPDGEKVLTVGLDKKGFILDGKTGEKVGA, AHALGIYSCSWSPDSKKVLTVSADKSAKIWDDKGTLLTTF, GHNKLVTSLAFDTASKALYSGSYDGVILQWNLETGIAVPI, ASTT…LSEQ, GHRGFLTAIAYSPDGKHFASADQNRDIFVWDKASRKIKVE, YHNARVTSLAWNSNSNNIVTGSLDSHVYVWSVSEPSKHIA, and AHRGGVNAVLWVDEHTVASAGLDCSIKTWTIK.

This sequence belongs to the WD repeat AIP1 family.

In terms of biological role, associated with the process of cyst formation. The sequence is that of 66 kDa stress protein from Physarum polycephalum (Slime mold).